Here is a 302-residue protein sequence, read N- to C-terminus: MYYGFDVGGTKIEFGAFNEKLERVATERVPTPTDNYELLVDTIAELVNKYDAEFGCEGTIGLGLPGMEDADDATVLTVNVPAAKGKPLRADLEAKIGRSVKIENDANCFALSEAWDEELQDEPSVLGLILGTGFGGGFIYDGKVFSGRNHVAGEVGHTRLPIDAWFHLGENAPLLGCGCDKKGCLDSYLSGRGFELLYAHYYGEEKKAIDIIKAHAEGEAKAVEHVERFMELLAICFANIFTATDPHVVVLGGGLSNFELIYEEMPKRIPKYLLSVAKCPKIIKAKHGDSGGVRGAAFLHIK.

ATP-binding positions include Gly4 to Lys11 and Gly133 to Tyr140. Residues His157, Cys177, Cys179, and Cys184 each contribute to the Zn(2+) site.

It belongs to the ROK (NagC/XylR) family. NagK subfamily.

It carries out the reaction N-acetyl-D-glucosamine + ATP = N-acetyl-D-glucosamine 6-phosphate + ADP + H(+). Its pathway is cell wall biogenesis; peptidoglycan recycling. Catalyzes the phosphorylation of N-acetyl-D-glucosamine (GlcNAc) derived from cell-wall degradation, yielding GlcNAc-6-P. The polypeptide is N-acetyl-D-glucosamine kinase (Vibrio parahaemolyticus serotype O3:K6 (strain RIMD 2210633)).